The chain runs to 201 residues: ATP-dependent Clp protease proteolytic subunit (201 aa).

Ser98 functions as the Nucleophile in the catalytic mechanism. Residue His123 is part of the active site.

It belongs to the peptidase S14 family. As to quaternary structure, fourteen ClpP subunits assemble into 2 heptameric rings which stack back to back to give a disk-like structure with a central cavity, resembling the structure of eukaryotic proteasomes.

The protein resides in the cytoplasm. The catalysed reaction is Hydrolysis of proteins to small peptides in the presence of ATP and magnesium. alpha-casein is the usual test substrate. In the absence of ATP, only oligopeptides shorter than five residues are hydrolyzed (such as succinyl-Leu-Tyr-|-NHMec, and Leu-Tyr-Leu-|-Tyr-Trp, in which cleavage of the -Tyr-|-Leu- and -Tyr-|-Trp bonds also occurs).. Cleaves peptides in various proteins in a process that requires ATP hydrolysis. Has a chymotrypsin-like activity. Plays a major role in the degradation of misfolded proteins. This Rickettsia typhi (strain ATCC VR-144 / Wilmington) protein is ATP-dependent Clp protease proteolytic subunit.